Here is a 23-residue protein sequence, read N- to C-terminus: 48 kDa cell wall protein (23 aa).

Its subcellular location is the secreted. The protein resides in the cell wall. The sequence is that of 48 kDa cell wall protein from Nicotiana tabacum (Common tobacco).